The sequence spans 295 residues: Bifunctional protein FolD (295 aa).

NADP(+)-binding positions include G166–S168, S195, and I236.

This sequence belongs to the tetrahydrofolate dehydrogenase/cyclohydrolase family. As to quaternary structure, homodimer.

It carries out the reaction (6R)-5,10-methylene-5,6,7,8-tetrahydrofolate + NADP(+) = (6R)-5,10-methenyltetrahydrofolate + NADPH. It catalyses the reaction (6R)-5,10-methenyltetrahydrofolate + H2O = (6R)-10-formyltetrahydrofolate + H(+). The protein operates within one-carbon metabolism; tetrahydrofolate interconversion. Its function is as follows. Catalyzes the oxidation of 5,10-methylenetetrahydrofolate to 5,10-methenyltetrahydrofolate and then the hydrolysis of 5,10-methenyltetrahydrofolate to 10-formyltetrahydrofolate. The sequence is that of Bifunctional protein FolD from Pelodictyon phaeoclathratiforme (strain DSM 5477 / BU-1).